Reading from the N-terminus, the 365-residue chain is MAWRANLACLIKAGGRTRWFPLPEYLSMSPVLHNTCSRRKSTAPEKLAASVAACDTNGKEPGTALGRLYSPEQQASILHVLNTASDKELEAFRLLRGRKSVNIVEHRKKFGPFQSLESLIGVPLIQYKTAVEVCNSILCPENRRRKKSQEKWVLRKFIKPGVEKERLKAVNSIVSIVFGTRRIAWAHLDRKPTVLDWQQAECWKLTNKTYPSSFYLEEISSVVSKIPKADLYILEKSGLSIQNTSLFPILLHFLITEAMLYALLNKTFAKDGQHRVLSINRNAVGKHFDLMIGDTRTSGRELVKQFLSESVLKEQPRVFFPRELAVQYRQKIVKSSHRIEELYDSLLQAVAFYELVFGSGSELKC.

A mitochondrion-targeting transit peptide spans 1 to 40 (MAWRANLACLIKAGGRTRWFPLPEYLSMSPVLHNTCSRRK).

The protein belongs to the TEFM family. As to quaternary structure, interacts with POLRMT.

Its subcellular location is the mitochondrion matrix. It localises to the mitochondrion nucleoid. In terms of biological role, transcription elongation factor which increases mitochondrial RNA polymerase processivity. Regulates transcription of the mitochondrial genome, including genes important for the oxidative phosphorylation machinery. This is Transcription elongation factor, mitochondrial (Tefm) from Rattus norvegicus (Rat).